We begin with the raw amino-acid sequence, 425 residues long: Serine/threonine-protein kinase VRK1 (425 aa).

One can recognise a Protein kinase domain in the interval 38–329 (WKLGSAVGQG…KLRGILQQGL (292 aa)). Residues 44-52 (VGQGGFGLL) and Lys72 each bind ATP. Asp178 (proton acceptor) is an active-site residue. A disordered region spans residues 343 to 425 (GVATNSTSLP…KSRGRPKKNS (83 aa)). A compositionally biased stretch (basic residues) spans 415-425 (KKSRGRPKKNS).

It belongs to the protein kinase superfamily. CK1 Ser/Thr protein kinase family. VRK subfamily.

It localises to the nucleus. The protein resides in the cytoplasm. Its subcellular location is the cajal body. It carries out the reaction L-seryl-[protein] + ATP = O-phospho-L-seryl-[protein] + ADP + H(+). The enzyme catalyses L-threonyl-[protein] + ATP = O-phospho-L-threonyl-[protein] + ADP + H(+). Functionally, serine/threonine kinase involved in the regulation of key cellular processes including the cell cycle, nuclear condensation, transcription regulation, and DNA damage response. Controls chromatin organization and remodeling by mediating phosphorylation of histone H3 on 'Thr-4' and histone H2AX (H2aXT4ph). It also phosphorylates KAT5 in response to DNA damage, promoting KAT5 association with chromatin and histone acetyltransferase activity. Is involved in the regulation of cell cycle progression of neural progenitors, and is required for proper cortical neuronal migration. Is involved in neurite elongation and branching in motor neurons, and has an essential role in Cajal bodies assembly, acting through COIL phosphorylation and the control of coilin degradation. Involved in Golgi disassembly during the cell cycle: following phosphorylation by PLK3 during mitosis, it is required to induce Golgi fragmentation. Phosphorylates BANF1: disrupts its ability to bind DNA, reduces its binding to LEM domain-containing proteins and causes its relocalization from the nucleus to the cytoplasm. Phosphorylates TP53BP1 and p53/TP53 on 'Thr-18', preventing the interaction between p53/TP53 and MDM2. Phosphorylates ATF2 which activates its transcriptional activity. Phosphorylates JUN. This chain is Serine/threonine-protein kinase VRK1 (vrk1), found in Danio rerio (Zebrafish).